A 370-amino-acid chain; its full sequence is sn-glycerol-3-phosphate import ATP-binding protein UgpC (370 aa).

Residues 4-236 enclose the ABC transporter domain; the sequence is LSLKNIAKRY…PATAFVAAFM (233 aa). ATP is bound at residue 38-45; sequence GPSGCGKS.

The protein belongs to the ABC transporter superfamily. sn-glycerol-3-phosphate importer (TC 3.A.1.1.3) family. The complex is composed of two ATP-binding proteins (UgpC), two transmembrane proteins (UgpA and UgpE) and a solute-binding protein (UgpB).

Its subcellular location is the cell inner membrane. It catalyses the reaction sn-glycerol 3-phosphate(out) + ATP + H2O = sn-glycerol 3-phosphate(in) + ADP + phosphate + H(+). In terms of biological role, part of the ABC transporter complex UgpBAEC involved in sn-glycerol-3-phosphate (G3P) import. Responsible for energy coupling to the transport system. The sequence is that of sn-glycerol-3-phosphate import ATP-binding protein UgpC from Chromobacterium violaceum (strain ATCC 12472 / DSM 30191 / JCM 1249 / CCUG 213 / NBRC 12614 / NCIMB 9131 / NCTC 9757 / MK).